The sequence spans 641 residues: White-opaque regulator 3 (641 aa).

Positions 13–27 (ANVNHQQLSQDTNSI) are enriched in polar residues. 3 disordered regions span residues 13 to 38 (ANVN…QQQP), 146 to 245 (QLAS…PMTR), and 258 to 287 (PIIY…PEPR). Low complexity-rich tracts occupy residues 28-38 (PQQQLQQQQQP) and 151-160 (QNQDQNQSQN). The span at 161–172 (RYEQSSMTSIHT) shows a compositional bias: polar residues. Residues 173 to 184 (NDNSSSVNNSPN) show a composition bias toward low complexity. Residues 193-204 (STFQPQHSNEGS) are compositionally biased toward polar residues. Low complexity-rich tracts occupy residues 216 to 242 (QQQQ…PQQP) and 264 to 280 (SSNS…NSSS). A dksA C4-type zinc finger spans residues 317–337 (CRRCGSEIPLAERRFVLCPSC). Disordered regions lie at residues 366–409 (LSKE…KVCQ), 480–507 (MSHQ…PQPH), 522–550 (NSGV…HNGS), and 568–641 (LQLQ…YPNN). Positions 379 to 400 (QNNKSNEDQNNESRRGSQEKPA) are enriched in basic and acidic residues. The span at 486 to 495 (QPPPPPPPPL) shows a compositional bias: pro residues. The span at 522–533 (NSGVAGIQQPNN) shows a compositional bias: polar residues. Positions 569–579 (QLQQQQQQQQQ) are enriched in low complexity. Over residues 597 to 606 (SFPPPPPPPL) the composition is skewed to pro residues. The span at 610-641 (QHQGLQQYSHAQQQQQQQHQQQQPYHQEYPNN) shows a compositional bias: low complexity.

It localises to the nucleus. Transcription factor that modulates the white-opaque switch. The sequence is that of White-opaque regulator 3 (WOR3) from Candida albicans (strain SC5314 / ATCC MYA-2876) (Yeast).